The chain runs to 218 residues: Thiopurine S-methyltransferase (218 aa).

Residues tryptophan 10, leucine 45, glutamate 66, and arginine 123 each coordinate S-adenosyl-L-methionine.

This sequence belongs to the class I-like SAM-binding methyltransferase superfamily. TPMT family.

The protein localises to the cytoplasm. The catalysed reaction is S-adenosyl-L-methionine + a thiopurine = S-adenosyl-L-homocysteine + a thiopurine S-methylether.. In Xanthomonas campestris pv. campestris (strain 8004), this protein is Thiopurine S-methyltransferase.